The sequence spans 44 residues: Protein PsbN (44 aa).

Residues 7 to 29 (FFTTFLGCLLLSITGYSIYVGFG) form a helical membrane-spanning segment.

The protein belongs to the PsbN family.

Its subcellular location is the plastid. The protein localises to the chloroplast thylakoid membrane. Its function is as follows. May play a role in photosystem I and II biogenesis. In Pleurastrum terricola (Filamentous green alga), this protein is Protein PsbN.